Here is a 400-residue protein sequence, read N- to C-terminus: Multidrug resistance protein MdtH (400 aa).

At 1-12 the chain is on the cytoplasmic side; that stretch reads MSRVSQARNLGK. Residues 13–33 traverse the membrane as a helical segment; the sequence is YFLLIDNMLVVLGFFVVFPLI. The Periplasmic segment spans residues 34–98; sequence SIRFVDQMGW…GFATMGIAHE (65 aa). The helical transmembrane segment at 99–116 threads the bilayer; it reads PWLLWFSCLLSGLGGTLF. Residues 117–138 lie on the Cytoplasmic side of the membrane; that stretch reads DPPRSALVVKLIRPQQRGRFFS. The chain crosses the membrane as a helical span at residues 139-159; that stretch reads LLMMQDSAGAVIGALLGSWLL. The Periplasmic portion of the chain corresponds to 160–164; it reads QYDFR. The helical transmembrane segment at 165–185 threads the bilayer; it reads LVCATGAVLFVLCAAFNAWLL. The Cytoplasmic segment spans residues 186–213; that stretch reads PAWKLSTVRTPVREGMTRVMRDKRFVTY. Residues 214-232 traverse the membrane as a helical segment; sequence VLTLAGYYMLAVQVMLPIM. At 233–241 the chain is on the periplasmic side; that stretch reads VNDVAGAPS. The chain crosses the membrane as a helical span at residues 242–262; it reads AVKWMYAIEACLSLTLLYPIA. The Cytoplasmic segment spans residues 263 to 274; it reads RWSEKHFRLEHR. The chain crosses the membrane as a helical span at residues 275–295; the sequence is LMAGLLIMSLSMMPVGMVSGL. Topologically, residues 296–297 are periplasmic; the sequence is QQ. Residues 298–318 form a helical membrane-spanning segment; it reads LFTLICLFYIGSIIAEPARET. At 319-337 the chain is on the cytoplasmic side; sequence LSASLADARARGSYMGFSR. A helical membrane pass occupies residues 338-358; the sequence is LGLAIGGAIGYIGGGWLFDLG. At 359-365 the chain is on the periplasmic side; sequence KSAHQPE. Residues 366–386 form a helical membrane-spanning segment; that stretch reads LPWMMLGIIGIFTFLALGWQF. The Cytoplasmic portion of the chain corresponds to 387–400; sequence SQKRAARRLLERDA.

Belongs to the major facilitator superfamily. DHA1 family. MdtH (TC 2.A.1.2.21) subfamily.

The protein localises to the cell inner membrane. In Shigella boydii serotype 4 (strain Sb227), this protein is Multidrug resistance protein MdtH.